The chain runs to 482 residues: UDP-N-acetylmuramate--L-alanine ligase (482 aa).

An ATP-binding site is contributed by 123 to 129 (GTHGKTT).

Belongs to the MurCDEF family.

The protein resides in the cytoplasm. The catalysed reaction is UDP-N-acetyl-alpha-D-muramate + L-alanine + ATP = UDP-N-acetyl-alpha-D-muramoyl-L-alanine + ADP + phosphate + H(+). Its pathway is cell wall biogenesis; peptidoglycan biosynthesis. Functionally, cell wall formation. The protein is UDP-N-acetylmuramate--L-alanine ligase of Pseudomonas putida (strain ATCC 47054 / DSM 6125 / CFBP 8728 / NCIMB 11950 / KT2440).